Consider the following 277-residue polypeptide: 3-methyl-2-oxobutanoate hydroxymethyltransferase (277 aa).

Positions 53 and 96 each coordinate Mg(2+). Residues 53–54 (DS), D96, and K126 contribute to the 3-methyl-2-oxobutanoate site. Position 128 (E128) interacts with Mg(2+). The Proton acceptor role is filled by E195.

This sequence belongs to the PanB family. Homodecamer; pentamer of dimers. Mg(2+) is required as a cofactor.

It is found in the cytoplasm. The enzyme catalyses 3-methyl-2-oxobutanoate + (6R)-5,10-methylene-5,6,7,8-tetrahydrofolate + H2O = 2-dehydropantoate + (6S)-5,6,7,8-tetrahydrofolate. It functions in the pathway cofactor biosynthesis; (R)-pantothenate biosynthesis; (R)-pantoate from 3-methyl-2-oxobutanoate: step 1/2. Its function is as follows. Catalyzes the reversible reaction in which hydroxymethyl group from 5,10-methylenetetrahydrofolate is transferred onto alpha-ketoisovalerate to form ketopantoate. This Chlorobium phaeobacteroides (strain BS1) protein is 3-methyl-2-oxobutanoate hydroxymethyltransferase.